The sequence spans 292 residues: Acetyl-coenzyme A carboxylase carboxyl transferase subunit beta (292 aa).

The CoA carboxyltransferase N-terminal domain maps to 35–292 (VFSQCEQCNS…LKLHAKKVTS (258 aa)). Zn(2+) is bound by residues Cys39, Cys42, Cys58, and Cys61. The C4-type zinc-finger motif lies at 39–61 (CEQCNSAIYNKDLEHNYEVCPYC).

Belongs to the AccD/PCCB family. Acetyl-CoA carboxylase is a heterohexamer composed of biotin carboxyl carrier protein (AccB), biotin carboxylase (AccC) and two subunits each of ACCase subunit alpha (AccA) and ACCase subunit beta (AccD). It depends on Zn(2+) as a cofactor.

Its subcellular location is the cytoplasm. It carries out the reaction N(6)-carboxybiotinyl-L-lysyl-[protein] + acetyl-CoA = N(6)-biotinyl-L-lysyl-[protein] + malonyl-CoA. It functions in the pathway lipid metabolism; malonyl-CoA biosynthesis; malonyl-CoA from acetyl-CoA: step 1/1. Component of the acetyl coenzyme A carboxylase (ACC) complex. Biotin carboxylase (BC) catalyzes the carboxylation of biotin on its carrier protein (BCCP) and then the CO(2) group is transferred by the transcarboxylase to acetyl-CoA to form malonyl-CoA. This is Acetyl-coenzyme A carboxylase carboxyl transferase subunit beta from Acholeplasma laidlawii (strain PG-8A).